Here is a 255-residue protein sequence, read N- to C-terminus: Segregation and condensation protein A (255 aa).

The protein belongs to the ScpA family. Component of a cohesin-like complex composed of ScpA, ScpB and the Smc homodimer, in which ScpA and ScpB bind to the head domain of Smc. The presence of the three proteins is required for the association of the complex with DNA.

The protein localises to the cytoplasm. Its function is as follows. Participates in chromosomal partition during cell division. May act via the formation of a condensin-like complex containing Smc and ScpB that pull DNA away from mid-cell into both cell halves. The polypeptide is Segregation and condensation protein A (Lactiplantibacillus plantarum (strain ATCC BAA-793 / NCIMB 8826 / WCFS1) (Lactobacillus plantarum)).